A 176-amino-acid chain; its full sequence is RNA 2',3'-cyclic phosphodiesterase (176 aa).

His-39 serves as the catalytic Proton donor. Short sequence motifs (HXTX) lie at residues 39-42 (HITL) and 122-125 (HLTV). Catalysis depends on His-122, which acts as the Proton acceptor.

This sequence belongs to the 2H phosphoesterase superfamily. ThpR family.

It carries out the reaction a 3'-end 2',3'-cyclophospho-ribonucleotide-RNA + H2O = a 3'-end 2'-phospho-ribonucleotide-RNA + H(+). Hydrolyzes RNA 2',3'-cyclic phosphodiester to an RNA 2'-phosphomonoester. This is RNA 2',3'-cyclic phosphodiesterase from Archaeoglobus fulgidus (strain ATCC 49558 / DSM 4304 / JCM 9628 / NBRC 100126 / VC-16).